Reading from the N-terminus, the 353-residue chain is C-C chemokine receptor type 8 (353 aa).

Topologically, residues 1-33 (MDYTMEPNVTMTDYYPDFFTAPCDAEFLLRGSM) are extracellular. The N-linked (GlcNAc...) asparagine glycan is linked to Asn8. The helical transmembrane segment at 34–61 (LYLAILYCVLFVLGLLGNSLVILVLVGC) threads the bilayer. Topologically, residues 62-71 (KKLRSITDIY) are cytoplasmic. The chain crosses the membrane as a helical span at residues 72–91 (LLNLAASDLLFVLSIPFQTH). The Extracellular portion of the chain corresponds to 92-105 (NLLDQWVFGTAMCK). A disulfide bond links Cys104 and Cys181. A helical transmembrane segment spans residues 106 to 127 (VVSGLYYIGFFSSMFFITLMSV). The Cytoplasmic portion of the chain corresponds to 128–144 (DRYLAIVHAVYAIKVRT). A helical transmembrane segment spans residues 145–169 (ASVGTALSLTVWLAAVTATIPLMVF). At 170–200 (YQVASEDGMLQCFQFYEEQSLRWKLFTHFEI) the chain is on the extracellular side. The chain crosses the membrane as a helical span at residues 201–220 (NALGLLLPFAILLFCYVRIL). The Cytoplasmic segment spans residues 221-236 (QQLRGCLNHNRTRAIK). A helical transmembrane segment spans residues 237-261 (LVLTVVIVSLLFWVPFNVALFLTSL). At 262–278 (HDLHILDGCATRQRLAL) the chain is on the extracellular side. The helical transmembrane segment at 279-302 (AIHVTEVISFTHCCVNPVIYAFIG) threads the bilayer. Residues 303 to 353 (EKFKKHLMDVFQKSCSHIFLYLGRQMPVGALERQLSSNQRSSHSSTLDDIL) lie on the Cytoplasmic side of the membrane.

It belongs to the G-protein coupled receptor 1 family. Expressed in thymus.

It localises to the cell membrane. Functionally, receptor for the CCL1/SCY1/TCA-3 chemokine. In Mus musculus (Mouse), this protein is C-C chemokine receptor type 8 (Ccr8).